The primary structure comprises 184 residues: Bcl-2-modifying factor (184 aa).

An interaction with DLC2 region spans residues 67 to 75 (DKATQTLSP). The short motif at 133-147 (IARKLQCIADQFHRL) is the BH3 element.

It belongs to the Bcl-2 family. In terms of assembly, interacts with MCL1, BCL2, BCL2L1/BCL-Xl, BCL2A1 and BCL2L2/BCL-w. Interacts with the myosin V actin motor complex through its binding to DLC2. In terms of tissue distribution, isoform 1 is mainly expressed in B-lymphoid cells. Isoform 2 and isoform 3 are mainly expressed in B-CLL and normal B-cells.

May play a role in apoptosis. Isoform 1 seems to be the main initiator. This is Bcl-2-modifying factor (BMF) from Homo sapiens (Human).